An 821-amino-acid polypeptide reads, in one-letter code: Condensin-2 complex subunit kle-2 (821 aa).

Residues 389–426 (VMQNDEPNTSRRPDENYAPMDFDDDFGGGGDDDDDDYI) form a disordered region. Residues 409–424 (DFDDDFGGGGDDDDDD) are compositionally biased toward acidic residues. Residues 529–561 (TAILAEKKRRIKEKTAKIREARIQNMQRKRTAR) are a coiled coil.

It belongs to the CND2 H2 (condensin-2 subunit 2) family. As to quaternary structure, component of the condensin II complex, which contains the mix-1/SMC2 and smc-4/SMC4 heterodimer, and three non SMC subunits, capg-2, kle-2 and hcp-6 that probably regulate the complex. Within the complex, interacts with mix-1, smc-4, capg-2 and hcp-6.

The protein localises to the nucleus. Its subcellular location is the chromosome. The protein resides in the centromere. Regulatory subunit of the condensin II complex, a complex that seems to play a role in prophase chromosome condensation and in chromosome segregation in mitosis and in meiosis. The polypeptide is Condensin-2 complex subunit kle-2 (kle-2) (Caenorhabditis elegans).